A 1009-amino-acid chain; its full sequence is Chitin synthase 2 (1009 aa).

Composition is skewed to polar residues over residues 1-12 (MSYNNPNNSNSH) and 34-62 (EFLNQRSNTPLTQGTYNYHNTSTNSLNFQ). Disordered stretches follow at residues 1 to 62 (MSYN…LNFQ) and 175 to 234 (DESQ…EVRS). The segment covering 192–202 (EGEEEEEEGET) has biased composition (acidic residues). 7 consecutive transmembrane segments (helical) span residues 647 to 667 (WLNGSFFAAIYSLVHFYKVWT), 682 to 702 (FFYQLINLIVSWFSIGSYFLV), 722 to 742 (ILSVIFLWLYLASIVTTFVLS), 757 to 777 (IVIFFAILMAYMIFAAIFMAV), 804 to 823 (LVVATSSTYALYFLASFLYF), 930 to 950 (VLVWMFTNFVVIALVLETGGF), and 967 to 987 (AAVFLTVILWTVAFMALFRFI).

Belongs to the chitin synthase family.

The protein resides in the cell membrane. The enzyme catalyses [(1-&gt;4)-N-acetyl-beta-D-glucosaminyl](n) + UDP-N-acetyl-alpha-D-glucosamine = [(1-&gt;4)-N-acetyl-beta-D-glucosaminyl](n+1) + UDP + H(+). Functionally, polymerizes chitin, a structural polymer of the cell wall and septum, by transferring the sugar moiety of UDP-GlcNAc to the non-reducing end of the growing chitin polymer. This chain is Chitin synthase 2 (CHS2), found in Candida albicans (Yeast).